A 388-amino-acid chain; its full sequence is Succinate--CoA ligase [ADP-forming] subunit beta (388 aa).

In terms of domain architecture, ATP-grasp spans 9-245 (KELLASYGLP…KSQENERELK (237 aa)). ATP is bound by residues lysine 46, 53–55 (GRG), glutamate 100, tyrosine 103, and glutamate 108. Positions 200 and 214 each coordinate Mg(2+). Substrate is bound by residues asparagine 265 and 322–324 (GIV).

Belongs to the succinate/malate CoA ligase beta subunit family. As to quaternary structure, heterotetramer of two alpha and two beta subunits. Mg(2+) is required as a cofactor.

The enzyme catalyses succinate + ATP + CoA = succinyl-CoA + ADP + phosphate. It catalyses the reaction GTP + succinate + CoA = succinyl-CoA + GDP + phosphate. It functions in the pathway carbohydrate metabolism; tricarboxylic acid cycle; succinate from succinyl-CoA (ligase route): step 1/1. Its function is as follows. Succinyl-CoA synthetase functions in the citric acid cycle (TCA), coupling the hydrolysis of succinyl-CoA to the synthesis of either ATP or GTP and thus represents the only step of substrate-level phosphorylation in the TCA. The beta subunit provides nucleotide specificity of the enzyme and binds the substrate succinate, while the binding sites for coenzyme A and phosphate are found in the alpha subunit. In Neisseria gonorrhoeae (strain ATCC 700825 / FA 1090), this protein is Succinate--CoA ligase [ADP-forming] subunit beta.